The chain runs to 570 residues: Proline--tRNA ligase (570 aa).

Belongs to the class-II aminoacyl-tRNA synthetase family. ProS type 1 subfamily. Homodimer.

It is found in the cytoplasm. It carries out the reaction tRNA(Pro) + L-proline + ATP = L-prolyl-tRNA(Pro) + AMP + diphosphate. Functionally, catalyzes the attachment of proline to tRNA(Pro) in a two-step reaction: proline is first activated by ATP to form Pro-AMP and then transferred to the acceptor end of tRNA(Pro). As ProRS can inadvertently accommodate and process non-cognate amino acids such as alanine and cysteine, to avoid such errors it has two additional distinct editing activities against alanine. One activity is designated as 'pretransfer' editing and involves the tRNA(Pro)-independent hydrolysis of activated Ala-AMP. The other activity is designated 'posttransfer' editing and involves deacylation of mischarged Ala-tRNA(Pro). The misacylated Cys-tRNA(Pro) is not edited by ProRS. This is Proline--tRNA ligase from Clostridium tetani (strain Massachusetts / E88).